We begin with the raw amino-acid sequence, 511 residues long: 2-methylbutanal oxime monooxygenase (511 aa).

A run of 2 helical transmembrane segments spans residues 10–30 (PPQW…LLLF) and 304–324 (ILMN…TWAF). Residue cysteine 451 participates in heme binding.

This sequence belongs to the cytochrome P450 family. It depends on heme as a cofactor. As to expression, expressed in storage roots, primary roots, petioles and vascular tissues. Expressed in the outer cortex cells, the endodermis and around the xylem, phloem cells and laticifers.

It is found in the microsome membrane. The catalysed reaction is (1E,2S)-2-methylbutanal oxime + reduced [NADPH--hemoprotein reductase] + O2 = 2-hydroxy-2-methylbutanenitrile + oxidized [NADPH--hemoprotein reductase] + 2 H2O + H(+). The enzyme catalyses (E)-2-methylpropanal oxime + reduced [NADPH--hemoprotein reductase] + O2 = 2-hydroxy-2-methylpropanenitrile + oxidized [NADPH--hemoprotein reductase] + 2 H2O + H(+). Catalyzes the conversion of (E)-2-methylpropanal oxime (valox) to 2-hydroxy-2-methylpropanenitrile (acetone cyanohydrin) and of (E)-2-methylbutanal oxime (ilox) to 2-hydroxy-2-methylbutyronitrile. The reaction takes place in three steps. First, the oxime is isomerized to the (Z)- isomer, next the (Z)-isomer is dehydrated to the corresponding nitrile, followed by a C-hydroxylation of the nitrile. Can use both aliphatic and aromatic oximes as substrates. The sequence is that of 2-methylbutanal oxime monooxygenase (CYP71E7) from Manihot esculenta (Cassava).